The primary structure comprises 572 residues: Laccase-3 (572 aa).

Residues 1-18 (MARTTFLVSVSLFVSAVL) form the signal peptide. 2 consecutive Plastocyanin-like domains span residues 21–145 (TVEY…LVIY) and 157–304 (IDDE…LIYE). Residues histidine 82, histidine 84, histidine 127, and histidine 129 each coordinate Cu cation. Residues cysteine 103 and cysteine 561 are joined by a disulfide bond. 5 N-linked (GlcNAc...) asparagine glycosylation sites follow: asparagine 182, asparagine 228, asparagine 294, asparagine 367, and asparagine 405. The Plastocyanin-like 3 domain maps to 422–540 (DMPTLLKILT…EGFAMVFAEA (119 aa)). Cu cation-binding residues include histidine 470, histidine 473, histidine 475, histidine 522, cysteine 523, histidine 524, and histidine 528.

This sequence belongs to the multicopper oxidase family. As to quaternary structure, homodimer. Cu cation serves as cofactor. As to expression, in mycelia, at a lower level than LCC4.

It is found in the secreted. It catalyses the reaction 4 hydroquinone + O2 = 4 benzosemiquinone + 2 H2O. Lignin degradation and detoxification of lignin-derived products. The sequence is that of Laccase-3 (LCC3) from Thanatephorus cucumeris (Black scurf of potato).